The primary structure comprises 388 residues: Succinate--CoA ligase [ADP-forming] subunit beta (388 aa).

The ATP-grasp domain occupies 9–244 (KQLFARYGLP…QSQEDPRAAQ (236 aa)). ATP contacts are provided by residues lysine 46, 53-55 (GRG), glutamate 99, threonine 102, and glutamate 107. Residues asparagine 199 and aspartate 213 each coordinate Mg(2+). Residues asparagine 264 and 321 to 323 (GIV) each bind substrate.

Belongs to the succinate/malate CoA ligase beta subunit family. In terms of assembly, heterotetramer of two alpha and two beta subunits. The cofactor is Mg(2+).

The enzyme catalyses succinate + ATP + CoA = succinyl-CoA + ADP + phosphate. It carries out the reaction GTP + succinate + CoA = succinyl-CoA + GDP + phosphate. The protein operates within carbohydrate metabolism; tricarboxylic acid cycle; succinate from succinyl-CoA (ligase route): step 1/1. Succinyl-CoA synthetase functions in the citric acid cycle (TCA), coupling the hydrolysis of succinyl-CoA to the synthesis of either ATP or GTP and thus represents the only step of substrate-level phosphorylation in the TCA. The beta subunit provides nucleotide specificity of the enzyme and binds the substrate succinate, while the binding sites for coenzyme A and phosphate are found in the alpha subunit. The polypeptide is Succinate--CoA ligase [ADP-forming] subunit beta (Shigella flexneri serotype 5b (strain 8401)).